Here is a 366-residue protein sequence, read N- to C-terminus: S-adenosylmethionine:tRNA ribosyltransferase-isomerase (366 aa).

This sequence belongs to the QueA family. In terms of assembly, monomer.

The protein localises to the cytoplasm. The enzyme catalyses 7-aminomethyl-7-carbaguanosine(34) in tRNA + S-adenosyl-L-methionine = epoxyqueuosine(34) in tRNA + adenine + L-methionine + 2 H(+). The protein operates within tRNA modification; tRNA-queuosine biosynthesis. Transfers and isomerizes the ribose moiety from AdoMet to the 7-aminomethyl group of 7-deazaguanine (preQ1-tRNA) to give epoxyqueuosine (oQ-tRNA). The protein is S-adenosylmethionine:tRNA ribosyltransferase-isomerase of Caulobacter vibrioides (strain ATCC 19089 / CIP 103742 / CB 15) (Caulobacter crescentus).